The following is a 651-amino-acid chain: Zinc metalloproteinase nas-32 (651 aa).

Residues 1-21 (MRRFFICYIGFLSIFLDFILA) form the signal peptide. The propeptide occupies 22 to 202 (DKDNNSEEER…EQSSKSRRKK (181 aa)). Residues Asn25, Asn72, and Asn251 are each glycosylated (N-linked (GlcNAc...) asparagine). A Peptidase M12A domain is found at 203–394 (RQIDNLAQFW…KMLNTHYSCS (192 aa)). 6 disulfides stabilise this stretch: Cys245/Cys393, Cys264/Cys283, Cys395/Cys412, Cys415/Cys426, Cys434/Cys467, and Cys495/Cys516. His291 is a Zn(2+) binding site. Residue Glu292 is part of the active site. Residues His295 and His301 each coordinate Zn(2+). Residues 380–433 (TFLDLKMLNTHYSCSCPTILSCGNGGFTNPANCSVCICPYGFGGALCTERTDYG) form the EGF-like domain. A glycan (N-linked (GlcNAc...) asparagine) is linked at Asn411. Positions 434–554 (CGSTLTATDT…TTYTWSYRYV (121 aa)) constitute a CUB domain. Asn453 carries an N-linked (GlcNAc...) asparagine glycan. Residue Asn557 is glycosylated (N-linked (GlcNAc...) asparagine). 3 cysteine pairs are disulfide-bonded: Cys610/Cys647, Cys619/Cys640, and Cys628/Cys644. One can recognise a ShKT domain in the interval 610–647 (CKDRFPKSQCSTYSTNGMCTQQPPLAAEFSCAETCGFC).

Zn(2+) serves as cofactor. In terms of tissue distribution, expressed in pharyngeal, anal depressor, intestinal and vulva muscles, head neurons and head mesodermal cell.

Its subcellular location is the secreted. Metalloprotease. The sequence is that of Zinc metalloproteinase nas-32 (nas-32) from Caenorhabditis elegans.